We begin with the raw amino-acid sequence, 274 residues long: Transcriptional activator PerA (274 aa).

Residues 168 to 265 enclose the HTH araC/xylS-type domain; the sequence is DRVIKVIELD…NTTPKKYNGV (98 aa). 2 consecutive DNA-binding regions (H-T-H motif) follow at residues 185–206 and 232–255; these read GDVSSSMFMSDSCLRKQLNKEN and IDEISCLVGFNSTSYFIKVFKEYY.

Functionally, could help in the transcriptional activator of eaeA expression in enteropathogenic E.coli. However, it seems that it is PerC which acts as an activator. The chain is Transcriptional activator PerA (perA) from Escherichia coli O127:H6 (strain E2348/69 / EPEC).